Here is a 495-residue protein sequence, read N- to C-terminus: Putative BTB/POZ domain-containing protein L98 (495 aa).

The BTB domain maps to 15-85 (SDLTIEFVDN…FYGIETTNDY (71 aa)).

This sequence belongs to the mimivirus BTB/WD family.

The protein is Putative BTB/POZ domain-containing protein L98 of Acanthamoeba polyphaga (Amoeba).